A 506-amino-acid polypeptide reads, in one-letter code: Protein MGF 505-9R (506 aa).

The protein belongs to the asfivirus MGF 505 family.

In terms of biological role, plays a role in virus cell tropism, and may be required for efficient virus replication in macrophages. This chain is Protein MGF 505-9R, found in African swine fever virus (isolate Tick/South Africa/Pretoriuskop Pr4/1996) (ASFV).